We begin with the raw amino-acid sequence, 89 residues long: Small ribosomal subunit protein uS15 (89 aa).

Belongs to the universal ribosomal protein uS15 family. As to quaternary structure, part of the 30S ribosomal subunit. Forms a bridge to the 50S subunit in the 70S ribosome, contacting the 23S rRNA.

One of the primary rRNA binding proteins, it binds directly to 16S rRNA where it helps nucleate assembly of the platform of the 30S subunit by binding and bridging several RNA helices of the 16S rRNA. Functionally, forms an intersubunit bridge (bridge B4) with the 23S rRNA of the 50S subunit in the ribosome. In Shewanella halifaxensis (strain HAW-EB4), this protein is Small ribosomal subunit protein uS15.